The following is a 364-amino-acid chain: Aminomethyltransferase (364 aa).

Belongs to the GcvT family. In terms of assembly, the glycine cleavage system is composed of four proteins: P, T, L and H.

The catalysed reaction is N(6)-[(R)-S(8)-aminomethyldihydrolipoyl]-L-lysyl-[protein] + (6S)-5,6,7,8-tetrahydrofolate = N(6)-[(R)-dihydrolipoyl]-L-lysyl-[protein] + (6R)-5,10-methylene-5,6,7,8-tetrahydrofolate + NH4(+). Functionally, the glycine cleavage system catalyzes the degradation of glycine. This is Aminomethyltransferase from Thermotoga sp. (strain RQ2).